Reading from the N-terminus, the 183-residue chain is A-type ATP synthase subunit E (183 aa).

It belongs to the V-ATPase E subunit family. In terms of assembly, has multiple subunits, A(3), B(3), C, D, E, F, G, I and K(x); there may be a few other subunits as well.

The protein resides in the cell membrane. Component of the A-type ATP synthase that produces ATP from ADP in the presence of a proton gradient across the membrane. This Methanosarcina mazei (strain ATCC BAA-159 / DSM 3647 / Goe1 / Go1 / JCM 11833 / OCM 88) (Methanosarcina frisia) protein is A-type ATP synthase subunit E.